A 394-amino-acid polypeptide reads, in one-letter code: MSQLETRTEPMVVNFGPHHPSMHGVLRLVVTLDGEDVVDCEPVIGYLHRGMEKIAENRTSVMFVPYVSRMDYAAGMFYEAIVVNAPERLANISVPKRASYIRVLMLELNRIANHLLWLGPFLADVGAQTPFFYIFREREMIYDLWEAATGQRLINNNYFRIGGVACDLPWGWLEKCQDFCDWFGPKIDEYEKLITNNPIFRRRIEGLGAIGRDEAINWSLSGPMLRASGVPWDLRKVDHYECYDDFDWDVAWEKEGDCYARYRVRIEEMRQSLKILRQACDMIPGGPTENLEAQRMAEGKTSPFMGFDYQYVAKKVAPTFKIPNGELYTRLESGKGEIGVFLQGNNDVTPWRFKIRAADLNNLQILPHILKGAKVADIMAILGSIDVIMGSVDR.

This sequence belongs to the complex I 49 kDa subunit family. In terms of assembly, NDH-1 can be composed of about 15 different subunits; different subcomplexes with different compositions have been identified which probably have different functions.

It localises to the cellular thylakoid membrane. It catalyses the reaction a plastoquinone + NADH + (n+1) H(+)(in) = a plastoquinol + NAD(+) + n H(+)(out). The enzyme catalyses a plastoquinone + NADPH + (n+1) H(+)(in) = a plastoquinol + NADP(+) + n H(+)(out). NDH-1 shuttles electrons from an unknown electron donor, via FMN and iron-sulfur (Fe-S) centers, to quinones in the respiratory and/or the photosynthetic chain. The immediate electron acceptor for the enzyme in this species is believed to be plastoquinone. Couples the redox reaction to proton translocation, and thus conserves the redox energy in a proton gradient. Cyanobacterial NDH-1 also plays a role in inorganic carbon-concentration. The polypeptide is NAD(P)H-quinone oxidoreductase subunit H (Prochlorococcus marinus (strain MIT 9313)).